Consider the following 332-residue polypeptide: Fructose-1,6-bisphosphatase class 1 (332 aa).

Mg(2+) is bound by residues glutamate 89, aspartate 110, leucine 112, and aspartate 113. Residues 113-116 (DGSS), asparagine 206, tyrosine 239, 257-259 (YLY), and lysine 269 contribute to the substrate site. Residue glutamate 275 coordinates Mg(2+).

It belongs to the FBPase class 1 family. In terms of assembly, homotetramer. Mg(2+) serves as cofactor.

It is found in the cytoplasm. The enzyme catalyses beta-D-fructose 1,6-bisphosphate + H2O = beta-D-fructose 6-phosphate + phosphate. It functions in the pathway carbohydrate biosynthesis; gluconeogenesis. The sequence is that of Fructose-1,6-bisphosphatase class 1 from Escherichia coli (strain ATCC 8739 / DSM 1576 / NBRC 3972 / NCIMB 8545 / WDCM 00012 / Crooks).